Reading from the N-terminus, the 547-residue chain is Chaperonin GroEL (547 aa).

ATP-binding positions include 30-33 (TLGP), Lys51, 87-91 (DGTTT), Gly415, and Asp496. The interval 528–547 (KEGAAPAGGMPDMGGMGGMM) is disordered. A compositionally biased stretch (gly residues) spans 538-547 (PDMGGMGGMM).

This sequence belongs to the chaperonin (HSP60) family. In terms of assembly, forms a cylinder of 14 subunits composed of two heptameric rings stacked back-to-back. Interacts with the co-chaperonin GroES.

The protein resides in the cytoplasm. The catalysed reaction is ATP + H2O + a folded polypeptide = ADP + phosphate + an unfolded polypeptide.. In terms of biological role, together with its co-chaperonin GroES, plays an essential role in assisting protein folding. The GroEL-GroES system forms a nano-cage that allows encapsulation of the non-native substrate proteins and provides a physical environment optimized to promote and accelerate protein folding. The polypeptide is Chaperonin GroEL (Ruegeria sp. (strain TM1040) (Silicibacter sp.)).